Consider the following 914-residue polypeptide: Probable dipeptidyl-aminopeptidase B (914 aa).

Residues Met-1–Arg-82 form a disordered region. Residues Met-1 to Ser-88 lie on the Cytoplasmic side of the membrane. The span at Asp-26–Ile-38 shows a compositional bias: low complexity. The chain crosses the membrane as a helical; Signal-anchor for type II membrane protein span at residues Ile-89–Phe-109. At Met-110–Ala-914 the chain is on the vacuolar side. 4 N-linked (GlcNAc...) asparagine glycosylation sites follow: Asn-128, Asn-295, Asn-347, and Asn-617. Ser-751 acts as the Charge relay system in catalysis. N-linked (GlcNAc...) asparagine glycosylation occurs at Asn-810. Residues Asp-828 and His-861 each act as charge relay system in the active site. Asn-897 is a glycosylation site (N-linked (GlcNAc...) asparagine).

The protein belongs to the peptidase S9B family.

Its subcellular location is the vacuole membrane. It carries out the reaction Release of an N-terminal dipeptide, Xaa-Yaa-|-Zaa-, from a polypeptide, preferentially when Yaa is Pro, provided Zaa is neither Pro nor hydroxyproline.. In terms of biological role, type IV dipeptidyl-peptidase which removes N-terminal dipeptides sequentially from polypeptides having unsubstituted N-termini provided that the penultimate residue is proline. This is Probable dipeptidyl-aminopeptidase B (DAPB) from Uncinocarpus reesii (strain UAMH 1704).